Consider the following 61-residue polypeptide: Protein translocase subunit SecE (61 aa).

Residues 39-59 form a helical membrane-spanning segment; sequence LGIILIGLIGMLIRIMGILVL.

This sequence belongs to the SecE/SEC61-gamma family. As to quaternary structure, component of the Sec protein translocase complex. Heterotrimer consisting of SecY (alpha), SecG (beta) and SecE (gamma) subunits. The heterotrimers can form oligomers, although 1 heterotrimer is thought to be able to translocate proteins. Interacts with the ribosome. May interact with SecDF, and other proteins may be involved.

The protein localises to the cell membrane. Essential subunit of the Sec protein translocation channel SecYEG. Clamps together the 2 halves of SecY. May contact the channel plug during translocation. This is Protein translocase subunit SecE from Pyrococcus abyssi (strain GE5 / Orsay).